The chain runs to 355 residues: UDP-N-acetylglucosamine--N-acetylmuramyl-(pentapeptide) pyrophosphoryl-undecaprenol N-acetylglucosamine transferase (355 aa).

Residues 11 to 13, Asn-123, Arg-162, Ser-185, Ile-239, 258 to 263, and Gln-284 contribute to the UDP-N-acetyl-alpha-D-glucosamine site; these read TGG and ALTVSE.

The protein belongs to the glycosyltransferase 28 family. MurG subfamily.

It is found in the cell inner membrane. The enzyme catalyses di-trans,octa-cis-undecaprenyl diphospho-N-acetyl-alpha-D-muramoyl-L-alanyl-D-glutamyl-meso-2,6-diaminopimeloyl-D-alanyl-D-alanine + UDP-N-acetyl-alpha-D-glucosamine = di-trans,octa-cis-undecaprenyl diphospho-[N-acetyl-alpha-D-glucosaminyl-(1-&gt;4)]-N-acetyl-alpha-D-muramoyl-L-alanyl-D-glutamyl-meso-2,6-diaminopimeloyl-D-alanyl-D-alanine + UDP + H(+). It participates in cell wall biogenesis; peptidoglycan biosynthesis. Cell wall formation. Catalyzes the transfer of a GlcNAc subunit on undecaprenyl-pyrophosphoryl-MurNAc-pentapeptide (lipid intermediate I) to form undecaprenyl-pyrophosphoryl-MurNAc-(pentapeptide)GlcNAc (lipid intermediate II). The protein is UDP-N-acetylglucosamine--N-acetylmuramyl-(pentapeptide) pyrophosphoryl-undecaprenol N-acetylglucosamine transferase of Hydrogenovibrio crunogenus (strain DSM 25203 / XCL-2) (Thiomicrospira crunogena).